Here is a 278-residue protein sequence, read N- to C-terminus: Ribosomal RNA small subunit methyltransferase A (278 aa).

S-adenosyl-L-methionine contacts are provided by asparagine 28, leucine 30, glycine 55, glutamate 77, aspartate 103, and asparagine 122.

The protein belongs to the class I-like SAM-binding methyltransferase superfamily. rRNA adenine N(6)-methyltransferase family. RsmA subfamily.

Its subcellular location is the cytoplasm. It carries out the reaction adenosine(1518)/adenosine(1519) in 16S rRNA + 4 S-adenosyl-L-methionine = N(6)-dimethyladenosine(1518)/N(6)-dimethyladenosine(1519) in 16S rRNA + 4 S-adenosyl-L-homocysteine + 4 H(+). Specifically dimethylates two adjacent adenosines (A1518 and A1519) in the loop of a conserved hairpin near the 3'-end of 16S rRNA in the 30S particle. May play a critical role in biogenesis of 30S subunits. This Cereibacter sphaeroides (strain ATCC 17023 / DSM 158 / JCM 6121 / CCUG 31486 / LMG 2827 / NBRC 12203 / NCIMB 8253 / ATH 2.4.1.) (Rhodobacter sphaeroides) protein is Ribosomal RNA small subunit methyltransferase A.